We begin with the raw amino-acid sequence, 389 residues long: Alkanesulfonate monooxygenase (389 aa).

This sequence belongs to the SsuD family.

The enzyme catalyses an alkanesulfonate + FMNH2 + O2 = an aldehyde + FMN + sulfite + H2O + 2 H(+). In terms of biological role, catalyzes the desulfonation of aliphatic sulfonates. This chain is Alkanesulfonate monooxygenase, found in Agrobacterium fabrum (strain C58 / ATCC 33970) (Agrobacterium tumefaciens (strain C58)).